A 1074-amino-acid polypeptide reads, in one-letter code: MKGACILAWLFSSLGVWRLARPETQDPAKCQRAEHPVVSYKEIGPWLREFRAENAVDFSRLTFDPGQKELVVGARNYLFRLQLEDLSLIQAVQWECDEATKKACYSKGKSKEECQNYIRVLLVGGDRLFTCGTNAFTPVCTIRSLSNLTEIHDQISGMARCPYSPQHNSTALLTASGELYAATAMDFPGRDPAIYRSLGTLPPLRTAQYNSKWLNEPNFVSSYDIGNFTYFFFRENAVEHDCGKTVFSRAARVCKNDIGGRFLLEDTWTTFMKARLNCSRPGEVPFYYNELQSTFFLPELDLIYGIFTTNVNSIAASAVCVFNLSAISQAFNGPFKYQENSRSAWLPYPNPNPNFQCGTMDQGLYVNLTERNLQDAQKFILMHEVVQPVTTVPSFMEDNSRFSHVAVDVVQGRDTLVHIIYLATDYGTIKKVRAPLSQSSGSCLLEEIELFPERKSEPIRSLKILHSQSVLFVGLQEHVVKIPLKRCHFHQTRGACIGAQDPYCGWDAVMKKCTSLEESLSMTQWDQSVPTCPTRNLTVDGSFGPWSPWTPCTHTDGTAVGSCLCRSRSCDSPAPQCGGWQCEGPRMEITNCSRNGGWTPWTSWSPCSTTCGIGFQVRQRSCSNPTPRHGGRVCVGQNREERYCNEHLLCPPHVFWTGWGPWERCTAQCGGGIQARRRTCENGPDCAGCNVEYQPCNTNACPELKKTTPWTPWTPVNISDNGGHYEQRFRYTCKARLPDPNLLEVGRQRIEMRYCSSDGTSGCSTDGLSGDFLRAGRYSAHTVNGAWSAWTSWSQCSRDCSRGIRNRKRVCNNPEPKYGGMPCLGPSLEFQECNILPCPVDGVWSCWSSWSKCSATCGGGHYMRTRSCTNPAPAYGGDICLGLHTEEALCNTQTCPENWSEWSEWSVCDASGTQVRTRQCILLFPVGSQCSGNTTESRPCVFDSNFIPEVSVARSSSVEEKRCGEFNMFHMMAVGLSSSILGCLLTLLVYTYCQRYQQQSHDATVIHPVSPAALNSSITNHINKLDKYDSVEAIKAFNKNNLILEERNKYFNPHLTGKTYSNAYFTDLNNYDEY.

The first 22 residues, 1–22, serve as a signal peptide directing secretion; it reads MKGACILAWLFSSLGVWRLARP. In terms of domain architecture, Sema spans 35-484; sequence HPVVSYKEIG…LQEHVVKIPL (450 aa). Intrachain disulfides connect C104/C114 and C131/C140. N147, N168, N227, and N277 each carry an N-linked (GlcNAc...) asparagine glycan. Disulfide bonds link C254/C357 and C278/C320. Residues N323 and N367 are each glycosylated (N-linked (GlcNAc...) asparagine). A PSI domain is found at 486–533; sequence RCHFHQTRGACIGAQDPYCGWDAVMKKCTSLEESLSMTQWDQSVPTCP. 2 N-linked (GlcNAc...) asparagine glycosylation sites follow: N536 and N591. TSP type-1 domains are found at residues 540 to 593, 595 to 651, and 653 to 702; these read DGSF…TNCS, NGGW…LLCP, and HVFW…NACP. 6 disulfide bridges follow: C607–C644, C611–C650, C622–C634, C665–C696, C669–C701, and C680–C686. N717 is a glycosylation site (N-linked (GlcNAc...) asparagine). 3 TSP type-1 domains span residues 784–839, 841–896, and 897–944; these read NGAW…LPCP, DGVW…QTCP, and ENWS…VFDS. 6 disulfide bridges follow: C796-C833, C800-C838, C811-C823, C853-C890, C857-C895, and C868-C880. 2 N-linked (GlcNAc...) asparagine glycosylation sites follow: N898 and N933. The chain crosses the membrane as a helical span at residues 969–989; sequence FHMMAVGLSSSILGCLLTLLV. An N-linked (GlcNAc...) asparagine glycan is attached at N1015.

Binds PLXNB3.

The protein localises to the membrane. Its function is as follows. Bifunctional axonal guidance cue regulated by sulfated proteoglycans; attractive effects result from interactions with heparan sulfate proteoglycans (HSPGs), while the inhibitory effects depend on interactions with chondroitin sulfate proteoglycans (CSPGs). Ligand for receptor PLXNB3. In glioma cells, SEMA5A stimulation of PLXNB3 results in the disassembly of F-actin stress fibers, disruption of focal adhesions and cellular collapse as well as inhibition of cell migration and invasion through ARHGDIA-mediated inactivation of RAC1. May promote angiogenesis by increasing endothelial cell proliferation and migration and inhibiting apoptosis. The sequence is that of Semaphorin-5A (Sema5a) from Rattus norvegicus (Rat).